Consider the following 172-residue polypeptide: Capsid protein (172 aa).

The tract at residues 1–26 (MASKWNWSGTKGRRTPRRPYGRPYKS) is disordered. Residues 11 to 20 (KGRRTPRRPY) are compositionally biased toward basic residues.

Belongs to the nanoviridae capsid protein family.

It is found in the virion. The chain is Capsid protein (DNA-S) from Faba bean necrotic yellows virus (isolate Syrian SV292-88) (FBNYV).